The following is a 338-amino-acid chain: Heat-inducible transcription repressor HrcA (338 aa).

This sequence belongs to the HrcA family.

Negative regulator of class I heat shock genes (grpE-dnaK-dnaJ and groELS operons). Prevents heat-shock induction of these operons. In Streptomyces albus G, this protein is Heat-inducible transcription repressor HrcA.